The chain runs to 343 residues: DNA-directed RNA polymerase subunit alpha (343 aa).

Positions 1–239 (MGETVTIQKN…DQLNVFVNFE (239 aa)) are alpha N-terminal domain (alpha-NTD). The tract at residues 255 to 343 (FNPAFLKKVD…ELAKRFEDHY (89 aa)) is alpha C-terminal domain (alpha-CTD).

The protein belongs to the RNA polymerase alpha chain family. In terms of assembly, homodimer. The RNAP catalytic core consists of 2 alpha, 1 beta, 1 beta' and 1 omega subunit. When a sigma factor is associated with the core the holoenzyme is formed, which can initiate transcription.

The enzyme catalyses RNA(n) + a ribonucleoside 5'-triphosphate = RNA(n+1) + diphosphate. Functionally, DNA-dependent RNA polymerase catalyzes the transcription of DNA into RNA using the four ribonucleoside triphosphates as substrates. The sequence is that of DNA-directed RNA polymerase subunit alpha from Bradyrhizobium sp. (strain BTAi1 / ATCC BAA-1182).